Reading from the N-terminus, the 371-residue chain is Fe(3+) ions import ATP-binding protein FbpC (371 aa).

The region spanning 5-235 (IKIENAQKRY…PANLFVATFI (231 aa)) is the ABC transporter domain. An ATP-binding site is contributed by 37–44 (GPSGCGKT).

Belongs to the ABC transporter superfamily. Fe(3+) ion importer (TC 3.A.1.10) family. In terms of assembly, the complex is composed of two ATP-binding proteins (FbpC), two transmembrane proteins (FbpB) and a solute-binding protein (FbpA).

The protein resides in the cell inner membrane. The enzyme catalyses Fe(3+)(out) + ATP + H2O = Fe(3+)(in) + ADP + phosphate + H(+). In terms of biological role, part of the ABC transporter complex FbpABC involved in Fe(3+) ions import. Responsible for energy coupling to the transport system. In Fusobacterium nucleatum subsp. nucleatum (strain ATCC 25586 / DSM 15643 / BCRC 10681 / CIP 101130 / JCM 8532 / KCTC 2640 / LMG 13131 / VPI 4355), this protein is Fe(3+) ions import ATP-binding protein FbpC.